A 191-amino-acid chain; its full sequence is Pyridoxal 5'-phosphate synthase subunit PdxT (191 aa).

52–54 (GES) contributes to the L-glutamine binding site. Cys-81 serves as the catalytic Nucleophile. L-glutamine contacts are provided by residues Arg-108 and 136 to 137 (IR). Residues His-172 and Glu-174 each act as charge relay system in the active site.

The protein belongs to the glutaminase PdxT/SNO family. In the presence of PdxS, forms a dodecamer of heterodimers. Only shows activity in the heterodimer.

It carries out the reaction aldehydo-D-ribose 5-phosphate + D-glyceraldehyde 3-phosphate + L-glutamine = pyridoxal 5'-phosphate + L-glutamate + phosphate + 3 H2O + H(+). The enzyme catalyses L-glutamine + H2O = L-glutamate + NH4(+). The protein operates within cofactor biosynthesis; pyridoxal 5'-phosphate biosynthesis. Functionally, catalyzes the hydrolysis of glutamine to glutamate and ammonia as part of the biosynthesis of pyridoxal 5'-phosphate. The resulting ammonia molecule is channeled to the active site of PdxS. In Actinobacillus pleuropneumoniae serotype 5b (strain L20), this protein is Pyridoxal 5'-phosphate synthase subunit PdxT.